A 156-amino-acid chain; its full sequence is ATP synthase subunit b (156 aa).

Residues 11 to 31 (AIAFILFVWFCMKYVWPPLMA) form a helical membrane-spanning segment.

Belongs to the ATPase B chain family. As to quaternary structure, F-type ATPases have 2 components, F(1) - the catalytic core - and F(0) - the membrane proton channel. F(1) has five subunits: alpha(3), beta(3), gamma(1), delta(1), epsilon(1). F(0) has three main subunits: a(1), b(2) and c(10-14). The alpha and beta chains form an alternating ring which encloses part of the gamma chain. F(1) is attached to F(0) by a central stalk formed by the gamma and epsilon chains, while a peripheral stalk is formed by the delta and b chains.

The protein localises to the cell inner membrane. F(1)F(0) ATP synthase produces ATP from ADP in the presence of a proton or sodium gradient. F-type ATPases consist of two structural domains, F(1) containing the extramembraneous catalytic core and F(0) containing the membrane proton channel, linked together by a central stalk and a peripheral stalk. During catalysis, ATP synthesis in the catalytic domain of F(1) is coupled via a rotary mechanism of the central stalk subunits to proton translocation. In terms of biological role, component of the F(0) channel, it forms part of the peripheral stalk, linking F(1) to F(0). The protein is ATP synthase subunit b of Enterobacter sp. (strain 638).